The primary structure comprises 876 residues: Valine--tRNA ligase (876 aa).

Positions 43 to 53 (PNVTGVLHMGH) match the 'HIGH' region motif. The 'KMSKS' region signature appears at 532–536 (KMSKS). Residue K535 participates in ATP binding. Coiled-coil stretches lie at residues 805-826 (GNMI…HKEG) and 853-875 (RKKQ…SLKN).

The protein belongs to the class-I aminoacyl-tRNA synthetase family. ValS type 1 subfamily. As to quaternary structure, monomer.

It localises to the cytoplasm. It catalyses the reaction tRNA(Val) + L-valine + ATP = L-valyl-tRNA(Val) + AMP + diphosphate. Catalyzes the attachment of valine to tRNA(Val). As ValRS can inadvertently accommodate and process structurally similar amino acids such as threonine, to avoid such errors, it has a 'posttransfer' editing activity that hydrolyzes mischarged Thr-tRNA(Val) in a tRNA-dependent manner. The protein is Valine--tRNA ligase of Bacteroides fragilis (strain ATCC 25285 / DSM 2151 / CCUG 4856 / JCM 11019 / LMG 10263 / NCTC 9343 / Onslow / VPI 2553 / EN-2).